The chain runs to 292 residues: D-alanyl-D-alanine endopeptidase (292 aa).

The N-terminal stretch at 1-18 is a signal peptide; sequence MFKKALFILSLCPSFALA. Ser45 (acyl-ester intermediate) is an active-site residue. Lys48 (proton acceptor) is an active-site residue. Ser102 is a catalytic residue. Substrate is bound at residue Lys207.

Belongs to the peptidase S11 family.

It is found in the periplasm. Its function is as follows. Cell wall formation. May play a specialized role in remodeling the cell wall. Specifically hydrolyzes the DD-diaminopimelate-alanine bonds in high-molecular-mass murein sacculi. This chain is D-alanyl-D-alanine endopeptidase (pbpG), found in Haemophilus influenzae (strain ATCC 51907 / DSM 11121 / KW20 / Rd).